A 435-amino-acid polypeptide reads, in one-letter code: Zinc finger CCCH domain-containing protein 16 (435 aa).

The segment at 1-27 adopts a C3H1-type zinc-finger fold; sequence MRKELCRNFQRGSCRYGENCRFLHPQQ. Residues 2–88 are 6 X 2 AA repeats of F-G; the sequence is RKELCRNFQR…ASTPTGGGAA (87 aa). Disordered regions lie at residues 25-105 and 205-374; these read PQQA…DHKC and TPSI…SQNN. Tandem repeats lie at residues 34–35 and 36–37. A compositionally biased stretch (low complexity) spans 39 to 51; sequence QNQQQQQQQQQQN. A run of 2 repeats spans residues 56-57 and 58-59. The span at 63 to 77 shows a compositional bias: polar residues; the sequence is GGSSRPNQFQNTWSR. Positions 78 to 99 are enriched in low complexity; sequence TASTPTGGGAAASTQQTGKQTQ. Polar residues-rich tracts occupy residues 205 to 320 and 328 to 339; these read TPSI…VNTP and SGFQTNPSTTFK. 2 repeat units span residues 343–344 and 359–360. Polar residues predominate over residues 351–374; sequence TTPQNNNIFGQSTPTPATNTSQNN.

In terms of assembly, part of the nuclear pore complex (NPC). The NPC has an eight-fold symmetrical structure comprising a central transport channel and two rings, the cytoplasmic and nuclear rings, to which eight filaments are attached. The cytoplasmic filaments have loose ends, while the nuclear filaments are joined in a distal ring, forming a nuclear basket. NPCs are highly dynamic in configuration and composition, and can be devided in 3 subcomplexes, the NUP62 subcomplex, the NUP107-160 subcomplex and the NUP93 subcomplex, containing approximately 30 different nucleoporin proteins.

It is found in the nucleus envelope. It localises to the nucleus. The protein localises to the nuclear pore complex. This chain is Zinc finger CCCH domain-containing protein 16, found in Arabidopsis thaliana (Mouse-ear cress).